The primary structure comprises 259 residues: Phosphate import ATP-binding protein PstB 1 (259 aa).

In terms of domain architecture, ABC transporter spans isoleucine 13–isoleucine 254. An ATP-binding site is contributed by glycine 45 to serine 52.

Belongs to the ABC transporter superfamily. Phosphate importer (TC 3.A.1.7) family. In terms of assembly, the complex is composed of two ATP-binding proteins (PstB), two transmembrane proteins (PstC and PstA) and a solute-binding protein (PstS).

It is found in the cell inner membrane. It catalyses the reaction phosphate(out) + ATP + H2O = ADP + 2 phosphate(in) + H(+). Part of the ABC transporter complex PstSACB involved in phosphate import. Responsible for energy coupling to the transport system. In Pseudomonas savastanoi pv. phaseolicola (strain 1448A / Race 6) (Pseudomonas syringae pv. phaseolicola (strain 1448A / Race 6)), this protein is Phosphate import ATP-binding protein PstB 1.